Reading from the N-terminus, the 639-residue chain is Homeobox protein 9 (639 aa).

6 disordered regions span residues 1–45, 66–144, 157–179, 262–313, 331–422, and 436–547; these read MLNS…DKQN, SPNH…DDNS, NQNQNQNQNQNQNQNQNQNQNQN, PRTL…SSGT, SESS…QTSN, and TNKN…NNEN. Residues 72 to 109 adopt a coiled-coil conformation; sequence ANNNNNNNNNNNNNNNNNNNNNNNNNNNNNNNNNNNIQ. Low complexity-rich tracts occupy residues 73-119 and 126-142; these read NNNN…SNNN and GSLNSSNDNNFNSGNDD. Coiled coils occupy residues 152–184 and 230–296; these read SNQNQNQNQNQNQNQNQNQNQNQNQNQNQKDSW and EIEI…NINE. Positions 266–300 are enriched in low complexity; sequence NNSSDSISENINNNNNNNNNNNNNNNNNINESNIN. Residues 345-354 are compositionally biased toward basic and acidic residues; sequence QPRKVPRDLN. Over residues 358 to 399 the composition is skewed to low complexity; it reads NNNINYANNNNNNNNNNNNNNHNNNINNNNNNNNNNNNNSNN. A coiled-coil region spans residues 365–396; sequence NNNNNNNNNNNNNNHNNNINNNNNNNNNNNNN. The span at 405–422 shows a compositional bias: polar residues; it reads GSITNSVNIKPSKDQTSN. Low complexity predominate over residues 436 to 526; it reads TNKNNNNNNN…NNNLTSSSNN (91 aa). The span at 532–547 shows a compositional bias: polar residues; sequence GNTSPNQSSANGNNEN. Positions 559–621 form a DNA-binding region, homeobox; sequence KRKKRGKLPG…NARRRILPRQ (63 aa).

The protein resides in the nucleus. Functionally, putative transcription factor. This is Homeobox protein 9 (hbx9) from Dictyostelium discoideum (Social amoeba).